A 369-amino-acid chain; its full sequence is Cellular tumor antigen p53 (369 aa).

The segment at 1–28 is transcription activation (acidic); sequence MAESQEFAELWERNLISTQEAGTCWELI. A DNA-binding region spans residues 66–256; that stretch reads DYPGEHGFKL…KTEESNFRKD (191 aa). Residues C140, H143, C202, and C206 each coordinate Zn(2+). The tract at residues 237-244 is interaction with DNA; it reads RVCACPGR. Basic and acidic residues predominate over residues 246-263; that stretch reads RKTEESNFRKDQETKTLD. Disordered regions lie at residues 246–296 and 318–369; these read RKTE…SGSS and NDSL…SDSD. Residues 269 to 281 are compositionally biased toward polar residues; sequence NKRSLTKDSTSSV. A Bipartite nuclear localization signal motif is present at residues 270 to 289; the sequence is KRSLTKDSTSSVPRPEGSKK. An oligomerization region spans residues 298 to 329; sequence EEIYTLQVRGKERYEMLKKINDSLELSDVVPP. The Nuclear export signal motif lies at 312 to 323; the sequence is EMLKKINDSLEL. The segment at 342–365 is basic (repression of DNA-binding); the sequence is KGKKKDGQTPEPKRGKKLMVKDEK. Residues 346 to 369 show a composition bias toward basic and acidic residues; that stretch reads KDGQTPEPKRGKKLMVKDEKSDSD.

The protein belongs to the p53 family. Binds DNA as a homotetramer. The cofactor is Zn(2+).

It is found in the cytoplasm. The protein localises to the nucleus. Functionally, multifunctional transcription factor that induces cell cycle arrest, DNA repair or apoptosis upon binding to its target DNA sequence. Acts as a tumor suppressor in many tumor types; induces growth arrest or apoptosis depending on the physiological circumstances and cell type. Negatively regulates cell division by controlling expression of a set of genes required for this process. One of the activated genes is an inhibitor of cyclin-dependent kinases. Apoptosis induction seems to be mediated either by stimulation of BAX and FAS antigen expression, or by repression of Bcl-2 expression. This chain is Cellular tumor antigen p53 (tp53), found in Barbus barbus (Barbel).